Consider the following 151-residue polypeptide: Small ribosomal subunit protein uS13 (151 aa).

Positions 131–151 are disordered; that stretch reads RGQRTKSSFRRGRTVGVKKKQ. Positions 133 to 151 are enriched in basic residues; sequence QRTKSSFRRGRTVGVKKKQ.

It belongs to the universal ribosomal protein uS13 family. As to quaternary structure, part of the 30S ribosomal subunit. Forms a loose heterodimer with protein S19. Forms two bridges to the 50S subunit in the 70S ribosome.

Located at the top of the head of the 30S subunit, it contacts several helices of the 16S rRNA. In the 70S ribosome it contacts the 23S rRNA (bridge B1a) and protein L5 of the 50S subunit (bridge B1b), connecting the 2 subunits; these bridges are implicated in subunit movement. The sequence is that of Small ribosomal subunit protein uS13 from Methanopyrus kandleri (strain AV19 / DSM 6324 / JCM 9639 / NBRC 100938).